The chain runs to 82 residues: Small ribosomal subunit protein bS16 (82 aa).

The protein belongs to the bacterial ribosomal protein bS16 family.

The protein is Small ribosomal subunit protein bS16 of Psychromonas ingrahamii (strain DSM 17664 / CCUG 51855 / 37).